The sequence spans 161 residues: Large ribosomal subunit protein uL15 (161 aa).

The tract at residues 1-43 is disordered; the sequence is MKLSDIADNAGSRKKRMRIGRGIGSGKGKTGGRGGKGQTARSG. The span at 21–37 shows a compositional bias: gly residues; that stretch reads RGIGSGKGKTGGRGGKG.

This sequence belongs to the universal ribosomal protein uL15 family. In terms of assembly, part of the 50S ribosomal subunit.

Its function is as follows. Binds to the 23S rRNA. In Nitrobacter hamburgensis (strain DSM 10229 / NCIMB 13809 / X14), this protein is Large ribosomal subunit protein uL15.